The chain runs to 261 residues: Ribosomal RNA small subunit methyltransferase J (261 aa).

S-adenosyl-L-methionine contacts are provided by residues Arg109–Asp110, Glu125–Arg126, and Asp179.

This sequence belongs to the methyltransferase superfamily. RsmJ family.

The protein resides in the cytoplasm. The enzyme catalyses guanosine(1516) in 16S rRNA + S-adenosyl-L-methionine = N(2)-methylguanosine(1516) in 16S rRNA + S-adenosyl-L-homocysteine + H(+). Specifically methylates the guanosine in position 1516 of 16S rRNA. The sequence is that of Ribosomal RNA small subunit methyltransferase J from Pseudomonas aeruginosa (strain UCBPP-PA14).